Reading from the N-terminus, the 138-residue chain is Centromere protein S (138 aa).

N-acetylmethionine is present on Met-1. The disordered stretch occupies residues 112 to 138 (AKKKKKLEDENRNSVESAEAGVEESEN).

It belongs to the TAF9 family. CENP-S/MHF1 subfamily. Heterodimer with CENPX, sometimes called MHF; this interaction stabilizes both partners. MHF heterodimers can assemble to form tetrameric structures. MHF also coassemble with CENPT-CENPW heterodimers at centromeres to form the tetrameric CENP-T-W-S-X complex. Forms a discrete complex with FANCM and CENPX, called FANCM-MHF; this interaction, probably mediated by direct binding between CENPS and FANCM, leads to synergistic activation of double-stranded DNA binding and strongly stimulates FANCM-mediated DNA remodeling. Recruited by FANCM to the Fanconi anemia (FA) core complex, which consists of CENPS, CENPX, FANCA, FANCB, FANCC, FANCE, FANCF, FANCG, FANCL, FANCM, FAAP24 and FAAP100. The FA core complex associates with Bloom syndrome (BLM) complex, which consists of at least BLM, DNA topoisomerase 3-alpha (TOP3A), RMI1/BLAP75, RPA1/RPA70 and RPA2/RPA32. The super complex between FA and BLM is called BRAFT. Component of the CENPA-CAD complex, composed of CENPI, CENPK, CENPL, CENPO, CENPP, CENPQ, CENPR and CENPS. The CENPA-CAD complex is probably recruited on centromeres by the CENPA-NAC complex, at least composed of CENPA, CENPC, CENPH, CENPM, CENPN, CENPT and CENPU.

Its subcellular location is the nucleus. The protein resides in the chromosome. The protein localises to the centromere. It localises to the kinetochore. In terms of biological role, DNA-binding component of the Fanconi anemia (FA) core complex. Required for the normal activation of the FA pathway, leading to monoubiquitination of the FANCI-FANCD2 complex in response to DNA damage, cellular resistance to DNA cross-linking drugs, and prevention of chromosomal breakage. In complex with CENPX (MHF heterodimer), crucial cofactor for FANCM in both binding and ATP-dependent remodeling of DNA. Stabilizes FANCM. In complex with CENPX and FANCM (but not other FANC proteins), rapidly recruited to blocked forks and promotes gene conversion at blocked replication forks. In complex with CENPT, CENPW and CENPX (CENP-T-W-S-X heterotetramer), involved in the formation of a functional kinetochore outer plate, which is essential for kinetochore-microtubule attachment and faithful mitotic progression. As a component of MHF and CENP-T-W-S-X complexes, binds DNA and bends it to form a nucleosome-like structure. DNA-binding function is fulfilled in the presence of CENPX, with the following preference for DNA substates: Holliday junction &gt; double-stranded &gt; splay arm &gt; single-stranded. Does not bind DNA on its own. The chain is Centromere protein S (CENPS) from Bos taurus (Bovine).